A 170-amino-acid chain; its full sequence is MQKGMTLVELLIGLAIISIALNFAVPLWKTDSPKTILAKEQHRLYLFLRQIQARAENSSEVWFLLINRNLATQQWCLTAQVKNNQTCDCLNPINCPKEVYAHFYYPYFPNKTMIQSHHIYPKEITRFDGIRNTIVTRCFILQAENERTLFLFFNVGSIRVKTNQFDSACN.

A helical transmembrane segment spans residues L7–L27.

It localises to the membrane. This is an uncharacterized protein from Haemophilus influenzae (strain ATCC 51907 / DSM 11121 / KW20 / Rd).